The chain runs to 190 residues: dITP/XTP pyrophosphatase (190 aa).

7–12 (SNNKNK) contacts substrate. The active-site Proton acceptor is aspartate 68. Aspartate 68 provides a ligand contact to Mg(2+). Substrate-binding positions include threonine 69, 148–151 (FGYD), lysine 171, and 176–177 (HR).

This sequence belongs to the HAM1 NTPase family. As to quaternary structure, homodimer. The cofactor is Mg(2+).

The enzyme catalyses XTP + H2O = XMP + diphosphate + H(+). The catalysed reaction is dITP + H2O = dIMP + diphosphate + H(+). It catalyses the reaction ITP + H2O = IMP + diphosphate + H(+). Its function is as follows. Pyrophosphatase that catalyzes the hydrolysis of nucleoside triphosphates to their monophosphate derivatives, with a high preference for the non-canonical purine nucleotides XTP (xanthosine triphosphate), dITP (deoxyinosine triphosphate) and ITP. Seems to function as a house-cleaning enzyme that removes non-canonical purine nucleotides from the nucleotide pool, thus preventing their incorporation into DNA/RNA and avoiding chromosomal lesions. The sequence is that of dITP/XTP pyrophosphatase from Flavobacterium psychrophilum (strain ATCC 49511 / DSM 21280 / CIP 103535 / JIP02/86).